Here is a 145-residue protein sequence, read N- to C-terminus: Arginine repressor (145 aa).

The protein belongs to the ArgR family.

The protein localises to the cytoplasm. The protein operates within amino-acid biosynthesis; L-arginine biosynthesis [regulation]. Regulates arginine biosynthesis genes. The sequence is that of Arginine repressor from Streptococcus mutans serotype c (strain ATCC 700610 / UA159).